A 591-amino-acid chain; its full sequence is Formate--tetrahydrofolate ligase (591 aa).

74–81 is an ATP binding site; the sequence is TPLGEGKS.

This sequence belongs to the formate--tetrahydrofolate ligase family.

It catalyses the reaction (6S)-5,6,7,8-tetrahydrofolate + formate + ATP = (6R)-10-formyltetrahydrofolate + ADP + phosphate. It functions in the pathway one-carbon metabolism; tetrahydrofolate interconversion. This is Formate--tetrahydrofolate ligase from Desulforapulum autotrophicum (strain ATCC 43914 / DSM 3382 / VKM B-1955 / HRM2) (Desulfobacterium autotrophicum).